Reading from the N-terminus, the 447-residue chain is ATP-dependent protease ATPase subunit HslU (447 aa).

ATP is bound by residues Ile-18, 60 to 65, Asp-259, Glu-325, and Arg-397; that span reads GVGKTE.

It belongs to the ClpX chaperone family. HslU subfamily. In terms of assembly, a double ring-shaped homohexamer of HslV is capped on each side by a ring-shaped HslU homohexamer. The assembly of the HslU/HslV complex is dependent on binding of ATP.

Its subcellular location is the cytoplasm. ATPase subunit of a proteasome-like degradation complex; this subunit has chaperone activity. The binding of ATP and its subsequent hydrolysis by HslU are essential for unfolding of protein substrates subsequently hydrolyzed by HslV. HslU recognizes the N-terminal part of its protein substrates and unfolds these before they are guided to HslV for hydrolysis. This is ATP-dependent protease ATPase subunit HslU from Burkholderia thailandensis (strain ATCC 700388 / DSM 13276 / CCUG 48851 / CIP 106301 / E264).